A 165-amino-acid polypeptide reads, in one-letter code: Small ribosomal subunit protein uS5 (165 aa).

The region spanning Leu10–Val73 is the S5 DRBM domain.

It belongs to the universal ribosomal protein uS5 family. As to quaternary structure, part of the 30S ribosomal subunit. Contacts proteins S4 and S8.

In terms of biological role, with S4 and S12 plays an important role in translational accuracy. Functionally, located at the back of the 30S subunit body where it stabilizes the conformation of the head with respect to the body. This Clostridium perfringens (strain ATCC 13124 / DSM 756 / JCM 1290 / NCIMB 6125 / NCTC 8237 / Type A) protein is Small ribosomal subunit protein uS5.